The chain runs to 561 residues: MAASAKRKQEEKHLKMLRDMTGLPHNRKCFDCDQRGPTYVNMTVGSFVCTSCSGSLRGLNPPHRVKSISMTTFTQQEIEFLQKHGNEVCKQIWLGLFDDRSSAIPDFRDPQKVKEFLQEKYEKKRWYVPPEQAKVVASVHASISGSSASSTSSTPEVKPLKSLLGESAPALHLNKGTPTQSPVVGRSQGQQQEKKQFDLLSDLGSDIFAAPAPQSTATANFANFAHFNSHAAQNSANAEFANFDAFGQSSGSSNFGGFPTASHSPFQPQTTGGSAGSVNANFAHFDNFPKSSSADFGSFSTSQSHQTASTVSKVSTNKAGLQTADKYAALANLDNIFSAGQGGDQGSGFGTTGKAPVGSVVSVPSHSSASSDKYAALAELDSVFSSAATSNNAYTSTSNASSSVFGTVPVGASPQTQPASSGPAPFGATPSTNPFVAATGPSAASSTNPFQTNARGATAATFGTASMSMPAGFGTPAQYSLPTSFSGSFQQPPFPAQAAFPQQTAFSQQPNGAGFATFGQTKPVVTPFGQVAAAGVSSNPFMTGAPTGQFPTGSSSTNPFL.

Residues Glu11–Val135 enclose the Arf-GAP domain. A C4-type zinc finger spans residues Cys29–Cys52. At Ser167 the chain carries Phosphoserine. The tract at residues Leu171–Glu193 is disordered. A compositionally biased stretch (polar residues) spans Gly176–Gln191. Thr177 is subject to Phosphothreonine. Ser181 and Ser362 each carry phosphoserine. Residue Ser367 is glycosylated (O-linked (GlcNAc) serine). The tract at residues Pro409–Gln451 is disordered. Polar residues predominate over residues Ser442 to Gln451.

In terms of assembly, interacts with EPS15R and EPS15. Interacts with FCHO1. In terms of processing, O-glycosylated.

It localises to the nucleus. The protein resides in the cytoplasmic vesicle. Required for vesicle docking or fusion during acrosome biogenesis. May play a role in RNA trafficking or localization. The sequence is that of Arf-GAP domain and FG repeat-containing protein 1 (Agfg1) from Rattus norvegicus (Rat).